Reading from the N-terminus, the 195-residue chain is Translation machinery-associated protein 22 (195 aa).

The 72-residue stretch at 94–165 (VLIKRIERNR…EAKEYIEKLL (72 aa)) folds into the SUI1 domain. The interval 176-195 (EQVDEKKKKKATAPGATPAA) is disordered.

This sequence belongs to the DENR family. In terms of assembly, interacts with the 40S ribosomal subunit.

The protein localises to the cytoplasm. This chain is Translation machinery-associated protein 22 (TMA22), found in Scheffersomyces stipitis (strain ATCC 58785 / CBS 6054 / NBRC 10063 / NRRL Y-11545) (Yeast).